The chain runs to 552 residues: Protein TRM32 (552 aa).

Positions 295–379 are disordered; that stretch reads TDLPRDSSTS…NKTAEKTETL (85 aa). The segment covering 331–351 has biased composition (basic and acidic residues); sequence VRAEKEEKYEVQEERSQENHL. Residues 352 to 371 show a composition bias toward polar residues; the sequence is DSSNQRILQQEPDSVPSTNK.

The protein is Protein TRM32 (TRM32) of Arabidopsis thaliana (Mouse-ear cress).